A 143-amino-acid chain; its full sequence is Transcriptional regulator MraZ (143 aa).

SpoVT-AbrB domains are found at residues 5–47 and 76–119; these read EYKH…SLKE and ACEC…SENN.

It belongs to the MraZ family. In terms of assembly, forms oligomers.

It localises to the cytoplasm. Its subcellular location is the nucleoid. The chain is Transcriptional regulator MraZ from Caldicellulosiruptor bescii (strain ATCC BAA-1888 / DSM 6725 / KCTC 15123 / Z-1320) (Anaerocellum thermophilum).